A 498-amino-acid chain; its full sequence is Glutathione synthetase large chain (498 aa).

Position 128 (arginine 128) interacts with substrate. Residue glutamate 146 coordinates ATP. Positions 146 and 148 each coordinate Mg(2+). Substrate-binding positions include 150–153 (ISVS), 233–235 (ERN), glutamine 239, and 291–294 (RVGY). Residue lysine 330 participates in ATP binding. Phosphoserine is present on serine 356. Residues 387–396 (KPQREGGGNN), tyrosine 398, 420–423 (MRYI), and glutamate 446 each bind ATP. Glutamate 391 provides a ligand contact to Mg(2+). Residue arginine 473 coordinates substrate. Residues lysine 475 and glutamate 481 each coordinate ATP. 484-485 (VA) lines the substrate pocket.

Belongs to the eukaryotic GSH synthase family. Heterodimer composed of a large and a small chain. Mg(2+) is required as a cofactor.

It catalyses the reaction gamma-L-glutamyl-L-cysteine + glycine + ATP = glutathione + ADP + phosphate + H(+). The protein operates within sulfur metabolism; glutathione biosynthesis; glutathione from L-cysteine and L-glutamate: step 2/2. The protein is Glutathione synthetase large chain (gsa1) of Schizosaccharomyces pombe (strain 972 / ATCC 24843) (Fission yeast).